The primary structure comprises 603 residues: Zinc finger protein 415 (603 aa).

Residues 264-286 (YRYIECDKALNHGSHMTVRQVSH) form a C2H2-type 1; degenerate zinc finger. 11 C2H2-type zinc fingers span residues 292–314 (YKCD…WRVH), 320–342 (YKCN…RRVH), 348–370 (YKCY…QKTH), 376–398 (YTCK…QVIH), 404–426 (YKCN…QRIH), 432–454 (YKCN…WRIH), 460–482 (YKCN…RRVH), 488–510 (YKCN…QVIH), 516–538 (YKCN…QVIH), 544–566 (YKCN…QIIH), and 572–594 (YKCS…QIIH).

In terms of tissue distribution, expressed in all tissues examined. Isoforms are differentially expressed. Isoform 3 and isoform 5 were highly expressed, isoform 4 moderately expressed, isoform 2 lower expression, the lowest expression level was seem with isoform 1.

The protein localises to the nucleus. The protein resides in the cytoplasm. Functionally, involved in transcriptional regulation. Transcriptional activity differed among the various isoforms. All isoforms except isoform 3 seem to suppresses the transcriptional activities of AP-1 and p53/TP53. The protein is Zinc finger protein 415 (ZNF415) of Homo sapiens (Human).